The chain runs to 394 residues: Phosphoglycerate kinase (394 aa).

Substrate-binding positions include 21–23, Arg36, 60–63, Arg114, and Arg147; these read DLN and HLGN. Residues Lys198, Glu315, and 341–344 each bind ATP; that span reads GGET.

Belongs to the phosphoglycerate kinase family. As to quaternary structure, monomer.

It is found in the cytoplasm. It carries out the reaction (2R)-3-phosphoglycerate + ATP = (2R)-3-phospho-glyceroyl phosphate + ADP. It functions in the pathway carbohydrate degradation; glycolysis; pyruvate from D-glyceraldehyde 3-phosphate: step 2/5. The polypeptide is Phosphoglycerate kinase (Wigglesworthia glossinidia brevipalpis).